The primary structure comprises 88 residues: Large ribosomal subunit protein bL31B (88 aa).

It belongs to the bacterial ribosomal protein bL31 family. Type B subfamily. In terms of assembly, part of the 50S ribosomal subunit.

This Corynebacterium glutamicum (strain R) protein is Large ribosomal subunit protein bL31B.